The primary structure comprises 252 residues: ATP synthase subunit a (252 aa).

Transmembrane regions (helical) follow at residues 29–49 (FTNV…FLFI), 87–107 (FFPL…IGLF), 117–137 (IMIT…CGFY), 146–166 (LFVP…IEVI), 196–216 (FIVS…LPLI), and 219–239 (VAIT…FTVL).

This sequence belongs to the ATPase A chain family. As to quaternary structure, F-type ATPases have 2 components, CF(1) - the catalytic core - and CF(0) - the membrane proton channel. CF(1) has five subunits: alpha(3), beta(3), gamma(1), delta(1), epsilon(1). CF(0) has three main subunits: a(1), b(2) and c(9-12). The alpha and beta chains form an alternating ring which encloses part of the gamma chain. CF(1) is attached to CF(0) by a central stalk formed by the gamma and epsilon chains, while a peripheral stalk is formed by the delta and b chains.

The protein resides in the cell inner membrane. Functionally, key component of the proton channel; it plays a direct role in the translocation of protons across the membrane. This chain is ATP synthase subunit a, found in Bartonella bacilliformis (strain ATCC 35685 / KC583 / Herrer 020/F12,63).